A 647-amino-acid chain; its full sequence is Knirps-related protein (647 aa).

A DNA-binding region (nuclear receptor) is located at residues 11–87 (NQTCKVCGEP…VGMSKSGSRY (77 aa)). 2 NR C4-type zinc fingers span residues 14–34 (CKVC…CEGC) and 51–75 (CKNN…LKKC). 4 disordered regions span residues 111–142 (MAAH…KGMS), 196–274 (HKHP…LSPF), 340–383 (GAGQ…LLTN), and 402–600 (SQQQ…NSIL). Gly residues predominate over residues 120–134 (AGGGSSGGSGGGQGM). Composition is skewed to low complexity over residues 200–223 (VVAS…VSSV) and 232–247 (GGKS…ADGS). The segment covering 248 to 260 (HSGGGGGGGGGVT) has biased composition (gly residues). 2 stretches are compositionally biased toward polar residues: residues 370–381 (SPSTHANNNHLL) and 420–432 (DYSI…PNSE). Basic and acidic residues-rich tracts occupy residues 433 to 443 (SGRERVKSRQN) and 480 to 491 (QEERTPAGEDPR). Positions 502 to 519 (LSMKTTGSSLSSKSSSPE) are enriched in low complexity. Residues 520–541 (IEPETEISSDVEKNDTDDDDED) are compositionally biased toward acidic residues. Over residues 542 to 556 (LKVTPEEEISVRETA) the composition is skewed to basic and acidic residues. Residues 567–579 (TTETAKTSIENTH) show a composition bias toward polar residues. The span at 580 to 599 (NNNNSISNNNNNNNNNNNSI) shows a compositional bias: low complexity.

It belongs to the nuclear hormone receptor family. NR0 subfamily.

Its subcellular location is the nucleus. This is Knirps-related protein (knrl) from Drosophila melanogaster (Fruit fly).